Consider the following 160-residue polypeptide: Cytochrome b6-f complex subunit 4 (160 aa).

3 helical membrane-spanning segments follow: residues 36–56, 95–115, and 131–151; these read LLYM…GLAV, LLGV…PFIE, and TVFL…CLPI.

This sequence belongs to the cytochrome b family. PetD subfamily. In terms of assembly, the 4 large subunits of the cytochrome b6-f complex are cytochrome b6, subunit IV (17 kDa polypeptide, petD), cytochrome f and the Rieske protein, while the 4 small subunits are petG, petL, petM and petN. The complex functions as a dimer.

It is found in the plastid. Its subcellular location is the chloroplast thylakoid membrane. Its function is as follows. Component of the cytochrome b6-f complex, which mediates electron transfer between photosystem II (PSII) and photosystem I (PSI), cyclic electron flow around PSI, and state transitions. The polypeptide is Cytochrome b6-f complex subunit 4 (Tupiella akineta (Green alga)).